A 415-amino-acid chain; its full sequence is ATP-dependent Clp protease ATP-binding subunit ClpX (415 aa).

A ClpX-type ZB domain is found at 1 to 53 (MLRSKGDLVLGCSFCGKKEDERRRIVTGHGVSICNYCVERCAEYLRDRKPSAL). The Zn(2+) site is built by cysteine 12, cysteine 15, cysteine 34, and cysteine 37. Residue 118–125 (PTGSGKTL) participates in ATP binding.

Belongs to the ClpX chaperone family. In terms of assembly, component of the ClpX-ClpP complex. Forms a hexameric ring that, in the presence of ATP, binds to fourteen ClpP subunits assembled into a disk-like structure with a central cavity, resembling the structure of eukaryotic proteasomes.

Its function is as follows. ATP-dependent specificity component of the Clp protease. It directs the protease to specific substrates. Can perform chaperone functions in the absence of ClpP. In Treponema pallidum (strain Nichols), this protein is ATP-dependent Clp protease ATP-binding subunit ClpX.